A 556-amino-acid polypeptide reads, in one-letter code: Cytochrome P450 monooxygenase polC (556 aa).

Residues 17-37 form a helical membrane-spanning segment; that stretch reads LCFAISLLCAVAIATFLHKLY. A heme-binding site is contributed by Cys-479.

The protein belongs to the cytochrome P450 family. The cofactor is heme.

The protein resides in the membrane. It carries out the reaction motiol + 3 reduced [NADPH--hemoprotein reductase] + 3 O2 = 4beta-carboxyl motiol + 3 oxidized [NADPH--hemoprotein reductase] + 4 H2O + 4 H(+). It functions in the pathway secondary metabolite biosynthesis; terpenoid biosynthesis. In terms of biological role, cytochrome P450 monooxygenase; part of the gene cluster that mediates the biosynthesis of antifungal fernane-type triterpenoid polytolypin. PolC uses motiol as a substrate and converts the methyl group at position C-4 to a carboxyl group. Within the pathway, the triterpene cyclase polA first catalyzes the cyclization of 2,3-oxidosqualene to motiol, polC converts the 4-alpha-methyl group of motiol to a carboxyl group, polB is responsible for appending a hydroxyl group at the 2-alpha position and polE is a dual functional P450, which can catalyze the formation of both the 1-beta-hydroxyl group and 10-beta-carboxyl group. The chain is Cytochrome P450 monooxygenase polC from Polytolypa hystricis (strain UAMH7299).